The sequence spans 399 residues: 1-deoxy-D-xylulose 5-phosphate reductoisomerase (399 aa).

Positions 13, 14, 15, 16, and 127 each coordinate NADPH. Lys128 is a 1-deoxy-D-xylulose 5-phosphate binding site. Glu129 provides a ligand contact to NADPH. Asp153 serves as a coordination point for Mn(2+). Positions 154, 155, 187, and 210 each coordinate 1-deoxy-D-xylulose 5-phosphate. Position 155 (Glu155) interacts with Mn(2+). Position 216 (Gly216) interacts with NADPH. 1-deoxy-D-xylulose 5-phosphate is bound by residues Ser223, Asn228, Lys229, and Glu232. A Mn(2+)-binding site is contributed by Glu232.

It belongs to the DXR family. Mg(2+) is required as a cofactor. Mn(2+) serves as cofactor.

It catalyses the reaction 2-C-methyl-D-erythritol 4-phosphate + NADP(+) = 1-deoxy-D-xylulose 5-phosphate + NADPH + H(+). Its pathway is isoprenoid biosynthesis; isopentenyl diphosphate biosynthesis via DXP pathway; isopentenyl diphosphate from 1-deoxy-D-xylulose 5-phosphate: step 1/6. Its function is as follows. Catalyzes the NADPH-dependent rearrangement and reduction of 1-deoxy-D-xylulose-5-phosphate (DXP) to 2-C-methyl-D-erythritol 4-phosphate (MEP). This is 1-deoxy-D-xylulose 5-phosphate reductoisomerase from Bordetella parapertussis (strain 12822 / ATCC BAA-587 / NCTC 13253).